The following is a 386-amino-acid chain: DNA-directed RNA polymerase subunit Rpo1C (386 aa).

It belongs to the RNA polymerase beta' chain family. Part of the RNA polymerase complex.

The protein localises to the cytoplasm. The enzyme catalyses RNA(n) + a ribonucleoside 5'-triphosphate = RNA(n+1) + diphosphate. Its function is as follows. DNA-dependent RNA polymerase (RNAP) catalyzes the transcription of DNA into RNA using the four ribonucleoside triphosphates as substrates. Forms part of the jaw domain. This is DNA-directed RNA polymerase subunit Rpo1C from Methanococcus maripaludis (strain DSM 14266 / JCM 13030 / NBRC 101832 / S2 / LL).